The following is a 140-amino-acid chain: Nucleoside diphosphate kinase (140 aa).

ATP contacts are provided by Lys9, Phe57, Arg85, Thr91, Arg102, and Asn112. Catalysis depends on His115, which acts as the Pros-phosphohistidine intermediate.

It belongs to the NDK family. Homotetramer. It depends on Mg(2+) as a cofactor.

It is found in the cytoplasm. The catalysed reaction is a 2'-deoxyribonucleoside 5'-diphosphate + ATP = a 2'-deoxyribonucleoside 5'-triphosphate + ADP. The enzyme catalyses a ribonucleoside 5'-diphosphate + ATP = a ribonucleoside 5'-triphosphate + ADP. Major role in the synthesis of nucleoside triphosphates other than ATP. The ATP gamma phosphate is transferred to the NDP beta phosphate via a ping-pong mechanism, using a phosphorylated active-site intermediate. The chain is Nucleoside diphosphate kinase from Chlorobaculum tepidum (strain ATCC 49652 / DSM 12025 / NBRC 103806 / TLS) (Chlorobium tepidum).